The sequence spans 180 residues: UPF0227 protein Ent638_1623 (180 aa).

It belongs to the UPF0227 family.

The polypeptide is UPF0227 protein Ent638_1623 (Enterobacter sp. (strain 638)).